The following is a 112-amino-acid chain: Urease subunit beta (112 aa).

Belongs to the urease beta subunit family. As to quaternary structure, heterotrimer of UreA (gamma), UreB (beta) and UreC (alpha) subunits. Three heterotrimers associate to form the active enzyme.

It localises to the cytoplasm. The catalysed reaction is urea + 2 H2O + H(+) = hydrogencarbonate + 2 NH4(+). Its pathway is nitrogen metabolism; urea degradation; CO(2) and NH(3) from urea (urease route): step 1/1. This is Urease subunit beta from Thioalkalivibrio sulfidiphilus (strain HL-EbGR7).